Reading from the N-terminus, the 551-residue chain is L-lactate permease (551 aa).

Transmembrane regions (helical) follow at residues 13–33, 37–57, 69–89, 131–151, 159–179, 194–214, 245–265, 306–326, 366–386, 405–425, 438–458, and 530–550; these read NIWL…FALI, LKGY…ALLF, VVYG…AAVF, GAAG…GLGF, LCLI…PILV, MVGR…MAIM, IGPE…LTLF, FLFL…ALFA, FDWF…SIVW, LALP…SNYS, TGSA…FLTG, and IFTC…TWMI.

This sequence belongs to the lactate permease family.

Its subcellular location is the cell inner membrane. The catalysed reaction is (S)-lactate(in) + H(+)(in) = (S)-lactate(out) + H(+)(out). The enzyme catalyses (R)-lactate(in) + H(+)(in) = (R)-lactate(out) + H(+)(out). It catalyses the reaction glycolate(in) + H(+)(in) = glycolate(out) + H(+)(out). Its function is as follows. Uptake of L-lactate across the membrane. Can also transport D-lactate and glycolate. Seems to be driven by a proton motive force. The polypeptide is L-lactate permease (lldP) (Salmonella typhi).